The primary structure comprises 312 residues: Ribosomal protein L11 methyltransferase (312 aa).

The S-adenosyl-L-methionine site is built by Thr-160, Gly-181, Asp-203, and Asn-246.

Belongs to the methyltransferase superfamily. PrmA family.

Its subcellular location is the cytoplasm. The enzyme catalyses L-lysyl-[protein] + 3 S-adenosyl-L-methionine = N(6),N(6),N(6)-trimethyl-L-lysyl-[protein] + 3 S-adenosyl-L-homocysteine + 3 H(+). Functionally, methylates ribosomal protein L11. This chain is Ribosomal protein L11 methyltransferase, found in Staphylococcus aureus (strain JH1).